Consider the following 586-residue polypeptide: Serine/threonine-protein phosphatase 2A 56 kDa regulatory subunit delta isoform (586 aa).

The tract at residues 1 to 80 (MSPSPSSSGK…QSSSRFNLSK (80 aa)) is disordered. 6 consecutive repeat copies span residues 21-22 (QP), 23-24 (QP), 25-26 (QP), 27-28 (QP), 29-30 (QP), and 31-32 (QP). The 8 X 2 AA approximate tandem repeats of Q-P stretch occupies residues 21–36 (QPQPQPQPQPQPQSQP). Residues 23 to 35 (QPQPQPQPQPQSQ) show a composition bias toward pro residues. A 7; approximate repeat occupies 33–34 (QS). The stretch at 35–36 (QP) is repeat 8. Residues 36 to 45 (PPSSNKRPSN) show a composition bias toward low complexity. Thr47 is modified (phosphothreonine). Phosphoserine is present on residues Ser72, Ser73, and Ser74. Positions 507–514 (RAPPPLPP) match the SH3-binding; class I motif. The short motif at 532–549 (KRTVETEAVQMLKDIKKE) is the Nuclear localization signal element. Residues Ser557 and Ser582 each carry the phosphoserine modification.

Belongs to the phosphatase 2A regulatory subunit B56 family. PP2A consists of a common heterodimeric core enzyme, composed of a 36 kDa catalytic subunit (subunit C) and a 65 kDa constant regulatory subunit (PR65 or subunit A), that associates with a variety of regulatory subunits. Proteins that associate with the core dimer include three families of regulatory subunits B (the R2/B/PR55/B55, R3/B''/PR72/PR130/PR59 and R5/B'/B56 families), the 48 kDa variable regulatory subunit, viral proteins, and cell signaling molecules. Interacts with the PP2A A subunit PPP2R1A. Interacts with SGO1. Interacts with ADCY8. In terms of tissue distribution, highly expressed in brain.

Its subcellular location is the nucleus. Its function is as follows. The B regulatory subunit might modulate substrate selectivity and catalytic activity, and might also direct the localization of the catalytic enzyme to a particular subcellular compartment. The chain is Serine/threonine-protein phosphatase 2A 56 kDa regulatory subunit delta isoform (PPP2R5D) from Oryctolagus cuniculus (Rabbit).